Here is a 409-residue protein sequence, read N- to C-terminus: Nucleoprotein (409 aa).

2 disordered regions span residues 1–64 (MSAG…SNVK) and 167–197 (RNSS…VDDD). The interval 30 to 161 (GTGQASWFQS…NNYRWDFIAL (132 aa)) is RNA-binding. The region spanning 32–157 (GQASWFQSLK…GGPDNNYRWD (126 aa)) is the CoV N NTD domain. The span at 176–197 (ENSRPGSRDSSRGRQRSRVDDD) shows a compositional bias: basic and acidic residues. Residue serine 192 is modified to Phosphoserine; by host. In terms of domain architecture, CoV N CTD spans 217–333 (SKQKANEMAE…ECVDGVGTRP (117 aa)). Residues 228 to 335 (KYHKRAIAPG…VDGVGTRPKD (108 aa)) are dimerization. Residues cysteine 322 and cysteine 325 are joined by a disulfide bond. A disordered region spans residues 327 to 409 (DGVGTRPKDD…GEGAFDDINI (83 aa)). Over residues 332 to 349 (RPKDDPTPRSRAASKDRN) the composition is skewed to basic and acidic residues. A Phosphothreonine; by host modification is found at threonine 374.

Belongs to the gammacoronavirus nucleocapsid protein family. In terms of assembly, homooligomer. Both monomeric and oligomeric forms interact with RNA. Interacts with protein M. Interacts with NSP3; this interaction serves to tether the genome to the newly translated replicase-transcriptase complex at a very early stage of infection. ADP-ribosylated. The ADP-ribosylation is retained in the virion during infection. Post-translationally, phosphorylated on serine and threonine residues.

It localises to the virion. It is found in the host endoplasmic reticulum-Golgi intermediate compartment. The protein localises to the host Golgi apparatus. Functionally, packages the positive strand viral genome RNA into a helical ribonucleocapsid (RNP) and plays a fundamental role during virion assembly through its interactions with the viral genome and membrane protein M. Plays an important role in enhancing the efficiency of subgenomic viral RNA transcription as well as viral replication. The chain is Nucleoprotein from Gallus gallus (Chicken).